A 229-amino-acid polypeptide reads, in one-letter code: Ras-related protein RabZ (229 aa).

The tract at residues 1–39 (MGCFHSREPTATGKTKKEEPTSAVKTNKEEKSSNYVSEP) is disordered. G2 carries the N-myristoyl glycine lipid modification. C3 carries S-palmitoyl cysteine lipidation. Basic and acidic residues predominate over residues 15–32 (TKKEEPTSAVKTNKEEKS). 57–64 (GDQATGKS) provides a ligand contact to GTP. An Effector region motif is present at residues 79–88 (HKPSPIIIDC). Residues 106 to 110 (DTAGQ) and 164 to 167 (NKCD) contribute to the GTP site.

Belongs to the small GTPase superfamily. Rab family. Although this sequence lacks the C-terminal cysteine motifs subject to isoprenylation in other Rab proteins, it does have N-terminal myristoylation and S-palmitoylation sequence motifs.

This Dictyostelium discoideum (Social amoeba) protein is Ras-related protein RabZ (rabZ).